The primary structure comprises 285 residues: (3S)-malyl-CoA thioesterase (285 aa).

The substrate site is built by Arg-70 and Glu-122. Mg(2+) contacts are provided by Glu-122 and Asp-148.

The protein belongs to the HpcH/HpaI aldolase family. As to quaternary structure, homodimer or homotrimer. Mg(2+) serves as cofactor.

It carries out the reaction (S)-malyl-CoA + H2O = (S)-malate + CoA + H(+). Its function is as follows. Catalyzes the hydrolysis of (3S)-malyl-CoA to (3S)-malate and free CoA. Inactive towards beta-methylmalyl-CoA and other CoA esters. The protein is (3S)-malyl-CoA thioesterase of Cereibacter sphaeroides (strain KD131 / KCTC 12085) (Rhodobacter sphaeroides).